A 224-amino-acid polypeptide reads, in one-letter code: Deoxyribose-phosphate aldolase (224 aa).

Asp-98 acts as the Proton donor/acceptor in catalysis. The active-site Schiff-base intermediate with acetaldehyde is Lys-159. The Proton donor/acceptor role is filled by Lys-189.

It belongs to the DeoC/FbaB aldolase family. DeoC type 1 subfamily.

The protein resides in the cytoplasm. It carries out the reaction 2-deoxy-D-ribose 5-phosphate = D-glyceraldehyde 3-phosphate + acetaldehyde. Its pathway is carbohydrate degradation; 2-deoxy-D-ribose 1-phosphate degradation; D-glyceraldehyde 3-phosphate and acetaldehyde from 2-deoxy-alpha-D-ribose 1-phosphate: step 2/2. Catalyzes a reversible aldol reaction between acetaldehyde and D-glyceraldehyde 3-phosphate to generate 2-deoxy-D-ribose 5-phosphate. In Methanothermobacter thermautotrophicus (strain ATCC 29096 / DSM 1053 / JCM 10044 / NBRC 100330 / Delta H) (Methanobacterium thermoautotrophicum), this protein is Deoxyribose-phosphate aldolase.